Consider the following 108-residue polypeptide: Ribonuclease P protein component (108 aa).

It belongs to the RnpA family. In terms of assembly, consists of a catalytic RNA component (M1 or rnpB) and a protein subunit.

It carries out the reaction Endonucleolytic cleavage of RNA, removing 5'-extranucleotides from tRNA precursor.. RNaseP catalyzes the removal of the 5'-leader sequence from pre-tRNA to produce the mature 5'-terminus. It can also cleave other RNA substrates such as 4.5S RNA. The protein component plays an auxiliary but essential role in vivo by binding to the 5'-leader sequence and broadening the substrate specificity of the ribozyme. This Campylobacter jejuni subsp. doylei (strain ATCC BAA-1458 / RM4099 / 269.97) protein is Ribonuclease P protein component.